Reading from the N-terminus, the 417-residue chain is Serine hydroxymethyltransferase (417 aa).

(6S)-5,6,7,8-tetrahydrofolate contacts are provided by residues Leu-112 and 116 to 118; that span reads GHL. Position 221 is an N6-(pyridoxal phosphate)lysine (Lys-221). Position 247 (Glu-247) interacts with (6S)-5,6,7,8-tetrahydrofolate.

This sequence belongs to the SHMT family. In terms of assembly, homodimer. It depends on pyridoxal 5'-phosphate as a cofactor.

The protein resides in the cytoplasm. It catalyses the reaction (6R)-5,10-methylene-5,6,7,8-tetrahydrofolate + glycine + H2O = (6S)-5,6,7,8-tetrahydrofolate + L-serine. Its pathway is one-carbon metabolism; tetrahydrofolate interconversion. It participates in amino-acid biosynthesis; glycine biosynthesis; glycine from L-serine: step 1/1. Functionally, catalyzes the reversible interconversion of serine and glycine with tetrahydrofolate (THF) serving as the one-carbon carrier. This reaction serves as the major source of one-carbon groups required for the biosynthesis of purines, thymidylate, methionine, and other important biomolecules. Also exhibits THF-independent aldolase activity toward beta-hydroxyamino acids, producing glycine and aldehydes, via a retro-aldol mechanism. The sequence is that of Serine hydroxymethyltransferase from Borreliella afzelii (strain PKo) (Borrelia afzelii).